A 421-amino-acid chain; its full sequence is UDP-N-acetylglucosamine 1-carboxyvinyltransferase (421 aa).

Position 22-23 (22-23) interacts with phosphoenolpyruvate; the sequence is KN. Arg93 is a binding site for UDP-N-acetyl-alpha-D-glucosamine. The active-site Proton donor is the Cys117. The residue at position 117 (Cys117) is a 2-(S-cysteinyl)pyruvic acid O-phosphothioketal. UDP-N-acetyl-alpha-D-glucosamine is bound by residues 122–126, Asp308, and Ile330; that span reads RPVDL.

It belongs to the EPSP synthase family. MurA subfamily.

The protein resides in the cytoplasm. The catalysed reaction is phosphoenolpyruvate + UDP-N-acetyl-alpha-D-glucosamine = UDP-N-acetyl-3-O-(1-carboxyvinyl)-alpha-D-glucosamine + phosphate. Its pathway is cell wall biogenesis; peptidoglycan biosynthesis. In terms of biological role, cell wall formation. Adds enolpyruvyl to UDP-N-acetylglucosamine. This Pseudomonas putida (strain ATCC 700007 / DSM 6899 / JCM 31910 / BCRC 17059 / LMG 24140 / F1) protein is UDP-N-acetylglucosamine 1-carboxyvinyltransferase.